The following is a 283-amino-acid chain: Bifunctional protein FolD (283 aa).

Residues glycine 165–serine 167 and serine 190 contribute to the NADP(+) site.

This sequence belongs to the tetrahydrofolate dehydrogenase/cyclohydrolase family. Homodimer.

The catalysed reaction is (6R)-5,10-methylene-5,6,7,8-tetrahydrofolate + NADP(+) = (6R)-5,10-methenyltetrahydrofolate + NADPH. It carries out the reaction (6R)-5,10-methenyltetrahydrofolate + H2O = (6R)-10-formyltetrahydrofolate + H(+). It functions in the pathway one-carbon metabolism; tetrahydrofolate interconversion. Its function is as follows. Catalyzes the oxidation of 5,10-methylenetetrahydrofolate to 5,10-methenyltetrahydrofolate and then the hydrolysis of 5,10-methenyltetrahydrofolate to 10-formyltetrahydrofolate. This is Bifunctional protein FolD from Cupriavidus taiwanensis (strain DSM 17343 / BCRC 17206 / CCUG 44338 / CIP 107171 / LMG 19424 / R1) (Ralstonia taiwanensis (strain LMG 19424)).